Reading from the N-terminus, the 185-residue chain is Elongation factor P (185 aa).

The protein belongs to the elongation factor P family.

Its subcellular location is the cytoplasm. It functions in the pathway protein biosynthesis; polypeptide chain elongation. Functionally, involved in peptide bond synthesis. Stimulates efficient translation and peptide-bond synthesis on native or reconstituted 70S ribosomes in vitro. Probably functions indirectly by altering the affinity of the ribosome for aminoacyl-tRNA, thus increasing their reactivity as acceptors for peptidyl transferase. The chain is Elongation factor P from Nitrosomonas europaea (strain ATCC 19718 / CIP 103999 / KCTC 2705 / NBRC 14298).